Reading from the N-terminus, the 62-residue chain is Large ribosomal subunit protein uL29 (62 aa).

The protein belongs to the universal ribosomal protein uL29 family.

The polypeptide is Large ribosomal subunit protein uL29 (Helicobacter hepaticus (strain ATCC 51449 / 3B1)).